Here is a 347-residue protein sequence, read N- to C-terminus: Phenylalanine--tRNA ligase alpha subunit (347 aa).

Mg(2+) is bound at residue Glu261.

This sequence belongs to the class-II aminoacyl-tRNA synthetase family. Phe-tRNA synthetase alpha subunit type 1 subfamily. Tetramer of two alpha and two beta subunits. It depends on Mg(2+) as a cofactor.

It is found in the cytoplasm. The enzyme catalyses tRNA(Phe) + L-phenylalanine + ATP = L-phenylalanyl-tRNA(Phe) + AMP + diphosphate + H(+). This is Phenylalanine--tRNA ligase alpha subunit from Streptococcus pyogenes serotype M3 (strain ATCC BAA-595 / MGAS315).